A 628-amino-acid polypeptide reads, in one-letter code: Carbon monoxide dehydrogenase 1 (628 aa).

[4Fe-4S] cluster is bound by residues Cys44, Cys52, Cys53, Cys56, Cys61, and Cys75. 6 residues coordinate [Ni-4Fe-5S] cluster: His266, Cys302, Cys340, Cys448, Cys478, and Cys519.

This sequence belongs to the Ni-containing carbon monoxide dehydrogenase family. As to quaternary structure, homodimer. [4Fe-4S] cluster serves as cofactor. Requires [Ni-4Fe-5S] cluster as cofactor.

It carries out the reaction CO + 2 oxidized [2Fe-2S]-[ferredoxin] + H2O = 2 reduced [2Fe-2S]-[ferredoxin] + CO2 + 2 H(+). In terms of biological role, CODH oxidizes carbon monoxide coupled, via CooF, to the reduction of a hydrogen cation by a hydrogenase (possibly CooH). The polypeptide is Carbon monoxide dehydrogenase 1 (cooS1) (Methanosarcina acetivorans (strain ATCC 35395 / DSM 2834 / JCM 12185 / C2A)).